The following is a 417-amino-acid chain: Gamma-glutamyl phosphate reductase (417 aa).

This sequence belongs to the gamma-glutamyl phosphate reductase family.

The protein localises to the cytoplasm. It catalyses the reaction L-glutamate 5-semialdehyde + phosphate + NADP(+) = L-glutamyl 5-phosphate + NADPH + H(+). It functions in the pathway amino-acid biosynthesis; L-proline biosynthesis; L-glutamate 5-semialdehyde from L-glutamate: step 2/2. Its function is as follows. Catalyzes the NADPH-dependent reduction of L-glutamate 5-phosphate into L-glutamate 5-semialdehyde and phosphate. The product spontaneously undergoes cyclization to form 1-pyrroline-5-carboxylate. The chain is Gamma-glutamyl phosphate reductase from Haemophilus influenzae (strain PittGG).